The chain runs to 378 residues: Sphingosine 1-phosphate receptor 3 (378 aa).

Topologically, residues 1-40 (MATALPPRLQPVRGNETLREHYQYVGKLAGRLKEASEGST) are extracellular. Asn15 is a glycosylation site (N-linked (GlcNAc...) asparagine). A helical membrane pass occupies residues 41–65 (LTTVLFLVICSFIVLENLMVLIAIW). Topologically, residues 66–72 (KNNKFHN) are cytoplasmic. A helical membrane pass occupies residues 73–101 (RMYFFIGNLALCDLLAGIAYKVNILMSGK). Over 102–115 (KTFSLSPTVWFLRE) the chain is Extracellular. The chain crosses the membrane as a helical span at residues 116–134 (GSMFVALGASTCSLLAIAI). Topologically, residues 135 to 153 (ERHLTMIKMRPYDANKRHR) are cytoplasmic. Residues 154-179 (VFLLIGMCWLIAFTLGALPILGWNCL) traverse the membrane as a helical segment. At 180–195 (HNLPDCSTILPLYSKK) the chain is on the extracellular side. Residues 196 to 216 (YIAFCISIFTAILVTIVILYA) traverse the membrane as a helical segment. At 217–243 (RIYFLVKSSSRKVANHNNSERSMALLR) the chain is on the cytoplasmic side. Residues 244–265 (TVVIVVSVFIACWSPLFILFLI) form a helical membrane-spanning segment. At 266–281 (DVACRVQACPILFKAQ) the chain is on the extracellular side. The chain crosses the membrane as a helical span at residues 282–302 (WFIVLAVLNSAMNPVIYTLAS). Over 303-378 (KEMRRAFFRL…AALQNGIFCN (76 aa)) the chain is Cytoplasmic. Ser326 is subject to Phosphoserine. The tract at residues 327 to 357 (PIQPALDPSRSKSSSSNNSSHSPKVKEDLPH) is disordered. Residues 337–348 (SKSSSSNNSSHS) show a composition bias toward low complexity.

It belongs to the G-protein coupled receptor 1 family. In terms of tissue distribution, expressed in all tissues, but most abundantly in heart, placenta, kidney, and liver.

The protein resides in the cell membrane. Receptor for the lysosphingolipid sphingosine 1-phosphate (S1P). S1P is a bioactive lysophospholipid that elicits diverse physiological effect on most types of cells and tissues. When expressed in rat HTC4 hepatoma cells, is capable of mediating S1P-induced cell proliferation and suppression of apoptosis. The sequence is that of Sphingosine 1-phosphate receptor 3 from Homo sapiens (Human).